The sequence spans 496 residues: Probable cytosol aminopeptidase (496 aa).

Residues Lys-266 and Asp-271 each coordinate Mn(2+). The active site involves Lys-278. Residues Asp-289, Asp-348, and Glu-350 each contribute to the Mn(2+) site. Arg-352 is an active-site residue.

Belongs to the peptidase M17 family. The cofactor is Mn(2+).

The protein localises to the cytoplasm. The catalysed reaction is Release of an N-terminal amino acid, Xaa-|-Yaa-, in which Xaa is preferably Leu, but may be other amino acids including Pro although not Arg or Lys, and Yaa may be Pro. Amino acid amides and methyl esters are also readily hydrolyzed, but rates on arylamides are exceedingly low.. The enzyme catalyses Release of an N-terminal amino acid, preferentially leucine, but not glutamic or aspartic acids.. In terms of biological role, presumably involved in the processing and regular turnover of intracellular proteins. Catalyzes the removal of unsubstituted N-terminal amino acids from various peptides. This is Probable cytosol aminopeptidase from Pseudomonas syringae pv. tomato (strain ATCC BAA-871 / DC3000).